The following is a 428-amino-acid chain: Elongation factor 1-alpha (428 aa).

The tr-type G domain occupies 5–215; that stretch reads KPHINIVFIG…ALDQMPEPPK (211 aa). Positions 14 to 21 are G1; sequence GHVDHGKS. 14–21 lines the GTP pocket; the sequence is GHVDHGKS. S21 is a Mg(2+) binding site. Positions 68 to 72 are G2; sequence GITID. The G3 stretch occupies residues 89-92; sequence DAPG. GTP-binding positions include 89 to 93 and 144 to 147; these read DAPGH and NKMD. Residues 144–147 form a G4 region; the sequence is NKMD. Residues 181–183 form a G5 region; sequence SAW.

It belongs to the TRAFAC class translation factor GTPase superfamily. Classic translation factor GTPase family. EF-Tu/EF-1A subfamily.

The protein localises to the cytoplasm. It catalyses the reaction GTP + H2O = GDP + phosphate + H(+). GTP hydrolase that promotes the GTP-dependent binding of aminoacyl-tRNA to the A-site of ribosomes during protein biosynthesis. The protein is Elongation factor 1-alpha of Thermococcus celer.